A 925-amino-acid polypeptide reads, in one-letter code: Ectonucleotide pyrophosphatase/phosphodiesterase family member 1 (925 aa).

Positions Met-1 to Gly-17 are enriched in gly residues. Residues Met-1–Pro-43 form a disordered region. Residues Met-1–Lys-76 are Cytoplasmic-facing. Positions Ala-45–Pro-52 match the Di-leucine motif motif. Residues Val-77 to Leu-97 form a helical; Signal-anchor for type II membrane protein membrane-spanning segment. The Extracellular portion of the chain corresponds to Lys-98–Asp-925. SMB domains are found at residues Glu-104–Glu-144 and His-145–Ser-189. 10 cysteine pairs are disulfide-bonded: Cys-108-Cys-122, Cys-112-Cys-140, Cys-120-Cys-133, Cys-126-Cys-132, Cys-149-Cys-166, Cys-154-Cys-184, Cys-164-Cys-177, Cys-170-Cys-176, Cys-195-Cys-241, and Cys-203-Cys-415. Asn-179 is a glycosylation site (N-linked (GlcNAc...) asparagine). Positions Val-191–Leu-591 are phosphodiesterase. Asp-218, Thr-256, and Asn-277 together coordinate AMP. Zn(2+) is bound by residues Asp-218 and Thr-256. The active-site AMP-threonine intermediate is the Thr-256. Positions 256 and 277 each coordinate CMP. The dTMP site is built by Thr-256 and Asn-277. Thr-256 and Asn-277 together coordinate GMP. Residue Thr-256 is modified to Phosphothreonine. Residue Asn-285 is glycosylated (N-linked (GlcNAc...) asparagine). The GMP site is built by Leu-290, Lys-295, and Tyr-340. AMP contacts are provided by Lys-295 and Tyr-340. Residues Lys-295 and Tyr-340 each contribute to the CMP site. Tyr-340 contributes to the dTMP binding site. The N-linked (GlcNAc...) asparagine glycan is linked to Asn-341. Asp-376 provides a ligand contact to AMP. Zn(2+)-binding residues include Asp-376, His-380, Asp-423, and His-424. Position 376 (Asp-376) interacts with CMP. Asp-376 serves as a coordination point for dTMP. GMP is bound at residue Asp-376. His-380 is a 2',3'-cGAMP binding site. His-424 is an AMP binding site. His-424 lines the CMP pocket. His-424 is a dTMP binding site. Residue His-424 coordinates GMP. Cystine bridges form between Cys-431–Cys-530, Cys-480–Cys-868, Cys-614–Cys-672, Cys-626–Cys-726, Cys-628–Cys-711, and Cys-838–Cys-848. Residue Asn-477 is glycosylated (N-linked (GlcNAc...) asparagine). Position 532 (Ser-532) interacts with 2',3'-cGAMP. Residue His-535 coordinates AMP. His-535 contributes to the Zn(2+) binding site. Residue His-535 participates in CMP binding. Position 535 (His-535) interacts with dTMP. His-535 is a binding site for GMP. N-linked (GlcNAc...) asparagine glycosylation is found at Asn-585, Asn-643, Asn-700, Asn-731, and Asn-748. The segment at Asn-597–Ala-647 is linker. The tract at residues His-654–Asp-925 is nuclease-like domain. 5 residues coordinate Ca(2+): Asp-800, Asp-802, Asp-804, Arg-806, and Asp-808.

It belongs to the nucleotide pyrophosphatase/phosphodiesterase family. In terms of assembly, homodimer. Interacts with INSR; leading to inhibit INSR autophosphorylation and subsequent activation of INSR kinase activity. As to quaternary structure, monomeric. The cofactor is Zn(2+). In terms of processing, autophosphorylated as part of the catalytic cycle of phosphodiesterase/pyrophosphatase activity. N-glycosylated. Post-translationally, the secreted form is produced through cleavage at Lys-103 by intracellular processing. As to expression, expressed in plasma cells and also in a number of non-lymphoid tissues, including the distal convoluted tubule of the kidney, chondrocytes and epididymis. Expressed in melanocytes but not in keratinocytes.

The protein localises to the cell membrane. Its subcellular location is the basolateral cell membrane. It localises to the secreted. The enzyme catalyses Hydrolytically removes 5'-nucleotides successively from the 3'-hydroxy termini of 3'-hydroxy-terminated oligonucleotides.. It carries out the reaction a ribonucleoside 5'-triphosphate + H2O = a ribonucleoside 5'-phosphate + diphosphate + H(+). It catalyses the reaction ATP + H2O = AMP + diphosphate + H(+). The catalysed reaction is UTP + H2O = UMP + diphosphate + H(+). The enzyme catalyses GTP + H2O = GMP + diphosphate + H(+). It carries out the reaction CTP + H2O = CMP + diphosphate + H(+). It catalyses the reaction 2',3'-cGAMP + 2 H2O = GMP + AMP + 2 H(+). The catalysed reaction is P(1),P(4)-bis(5'-adenosyl) tetraphosphate + H2O = AMP + ATP + 2 H(+). The enzyme catalyses 3',5'-cyclic AMP + H2O = AMP + H(+). At low concentrations of ATP, a phosphorylated intermediate is formed which inhibits further hydrolysis. Nucleotide pyrophosphatase that generates diphosphate (PPi) and functions in bone mineralization and soft tissue calcification by regulating pyrophosphate levels. PPi inhibits bone mineralization and soft tissue calcification by binding to nascent hydroxyapatite crystals, thereby preventing further growth of these crystals. Preferentially hydrolyzes ATP, but can also hydrolyze other nucleoside 5' triphosphates such as GTP, CTP and UTP to their corresponding monophosphates with release of pyrophosphate, as well as diadenosine polyphosphates, and also 3',5'-cAMP to AMP. May also be involved in the regulation of the availability of nucleotide sugars in the endoplasmic reticulum and Golgi, and the regulation of purinergic signaling. Inhibits ectopic joint calcification and maintains articular chondrocytes by repressing hedgehog signaling; it is however unclear whether hedgehog inhibition is direct or indirect. Appears to modulate insulin sensitivity and function. Also involved in melanogenesis. Also able to hydrolyze 2',3'-cGAMP (cyclic GMP-AMP), a second messenger that activates TMEM173/STING and triggers type-I interferon production. 2',3'-cGAMP degradation takes place in the lumen or extracellular space, and not in the cytosol where it is produced; the role of 2',3'-cGAMP hydrolysis is therefore unclear. Not able to hydrolyze the 2',3'-cGAMP linkage isomer 3'-3'-cGAMP. The protein is Ectonucleotide pyrophosphatase/phosphodiesterase family member 1 of Homo sapiens (Human).